The sequence spans 311 residues: Endosome-associated-trafficking regulator 1 (311 aa).

Residues 167–278 (RGNAENGTKN…KSENERLRLG (112 aa)) adopt a coiled-coil conformation.

It belongs to the ENTR1 family.

It is found in the cytoplasm. The protein localises to the early endosome. The protein resides in the endosome. Its subcellular location is the recycling endosome. It localises to the midbody. It is found in the cytoskeleton. The protein localises to the microtubule organizing center. The protein resides in the centrosome. Its subcellular location is the cilium basal body. Functionally, endosome-associated protein that plays a role in membrane receptor sorting, cytokinesis and ciliogenesis. In Danio rerio (Zebrafish), this protein is Endosome-associated-trafficking regulator 1.